A 106-amino-acid chain; its full sequence is MAGGDIKKGANLFKTRCAQCHTVEKDGGNKIGPALHGLWGRKTGSVEGYSYTDANKQKGIEWNDDTLFEYLENPKKYIPGTKMAFGGLKKAKDRNDLIAYLKDSTK.

The heme c site is built by Cys17, Cys20, and His21. Residue Lys75 is modified to N6,N6,N6-trimethyllysine. Met83 contributes to the heme c binding site.

Belongs to the cytochrome c family. In terms of processing, binds 1 heme c group covalently per subunit.

The protein resides in the mitochondrion intermembrane space. Its function is as follows. Electron carrier protein. The oxidized form of the cytochrome c heme group can accept an electron from the heme group of the cytochrome c1 subunit of cytochrome reductase. Cytochrome c then transfers this electron to the cytochrome oxidase complex, the final protein carrier in the mitochondrial electron-transport chain. This chain is Cytochrome c (CYC1), found in Gibberella zeae (strain ATCC MYA-4620 / CBS 123657 / FGSC 9075 / NRRL 31084 / PH-1) (Wheat head blight fungus).